A 249-amino-acid polypeptide reads, in one-letter code: Phosphate import ATP-binding protein PstB (249 aa).

The ABC transporter domain maps to 4-244 (VKIKDLSLFY…PQDKRTEDYI (241 aa)). 36–43 (GPSGCGKS) is a binding site for ATP.

This sequence belongs to the ABC transporter superfamily. Phosphate importer (TC 3.A.1.7) family. As to quaternary structure, the complex is composed of two ATP-binding proteins (PstB), two transmembrane proteins (PstC and PstA) and a solute-binding protein (PstS).

Its subcellular location is the cell membrane. It catalyses the reaction phosphate(out) + ATP + H2O = ADP + 2 phosphate(in) + H(+). Part of the ABC transporter complex PstSACB involved in phosphate import. Responsible for energy coupling to the transport system. The chain is Phosphate import ATP-binding protein PstB from Clostridium tetani (strain Massachusetts / E88).